The sequence spans 217 residues: N-(5'-phosphoribosyl)anthranilate isomerase (217 aa).

It belongs to the TrpF family.

The enzyme catalyses N-(5-phospho-beta-D-ribosyl)anthranilate = 1-(2-carboxyphenylamino)-1-deoxy-D-ribulose 5-phosphate. The protein operates within amino-acid biosynthesis; L-tryptophan biosynthesis; L-tryptophan from chorismate: step 3/5. This chain is N-(5'-phosphoribosyl)anthranilate isomerase, found in Chlorobium phaeovibrioides (strain DSM 265 / 1930) (Prosthecochloris vibrioformis (strain DSM 265)).